Reading from the N-terminus, the 130-residue chain is Lysozyme C (130 aa).

In terms of domain architecture, C-type lysozyme spans 1 to 130 (KTYERCELAR…VSPWIRDCGL (130 aa)). Cystine bridges form between C6–C128, C30–C116, C65–C81, and C77–C95. Residues E35 and D53 contribute to the active site.

It belongs to the glycosyl hydrolase 22 family. In terms of assembly, monomer.

It localises to the secreted. The enzyme catalyses Hydrolysis of (1-&gt;4)-beta-linkages between N-acetylmuramic acid and N-acetyl-D-glucosamine residues in a peptidoglycan and between N-acetyl-D-glucosamine residues in chitodextrins.. Its function is as follows. Lysozymes have primarily a bacteriolytic function; those in tissues and body fluids are associated with the monocyte-macrophage system and enhance the activity of immunoagents. This is Lysozyme C (LYZ) from Chelonia mydas (Green sea-turtle).